A 184-amino-acid polypeptide reads, in one-letter code: Chromophore lyase CpcS/CpeS 1 (184 aa).

The protein belongs to the CpcS/CpeS biliprotein lyase family.

Its function is as follows. Covalently attaches a chromophore to Cys residue(s) of phycobiliproteins. This is Chromophore lyase CpcS/CpeS 1 from Synechococcus sp. (strain JA-3-3Ab) (Cyanobacteria bacterium Yellowstone A-Prime).